The chain runs to 105 residues: Defensin-like protein 106 (105 aa).

The first 24 residues, 1–24, serve as a signal peptide directing secretion; sequence MANTPKTLIAFVFSVIVIISYVHC. Cystine bridges form between C57–C94, C63–C87, C73–C92, and C77–C93.

Belongs to the DEFL family.

The protein localises to the secreted. This is Defensin-like protein 106 from Arabidopsis thaliana (Mouse-ear cress).